The primary structure comprises 120 residues: Large ribosomal subunit protein uL18 (120 aa).

The protein belongs to the universal ribosomal protein uL18 family. In terms of assembly, part of the 50S ribosomal subunit; part of the 5S rRNA/L5/L18/L25 subcomplex. Contacts the 5S and 23S rRNAs.

In terms of biological role, this is one of the proteins that bind and probably mediate the attachment of the 5S RNA into the large ribosomal subunit, where it forms part of the central protuberance. In Staphylococcus epidermidis (strain ATCC 35984 / DSM 28319 / BCRC 17069 / CCUG 31568 / BM 3577 / RP62A), this protein is Large ribosomal subunit protein uL18.